Consider the following 898-residue polypeptide: Eukaryotic translation initiation factor 3 subunit C (898 aa).

The span at Met-1–Asp-10 shows a compositional bias: basic and acidic residues. Disordered regions lie at residues Met-1 to Asp-38 and Val-162 to Lys-238. Residues Ser-11–Glu-23 show a composition bias toward acidic residues. The span at Asp-24–Leu-37 shows a compositional bias: basic and acidic residues. The span at Asp-170–Glu-187 shows a compositional bias: acidic residues. Basic and acidic residues predominate over residues Ser-189 to Glu-202. Residues Ser-209–Ser-218 are compositionally biased toward acidic residues. Over residues Ser-219–Asn-228 the composition is skewed to low complexity. The region spanning Tyr-630–Pro-806 is the PCI domain. The interval Gln-829–Phe-898 is disordered. 2 stretches are compositionally biased toward basic and acidic residues: residues Arg-850 to Lys-859 and Gly-866 to Arg-878. Over residues Gln-888 to Phe-898 the composition is skewed to basic residues.

Belongs to the eIF-3 subunit C family. Component of the eukaryotic translation initiation factor 3 (eIF-3) complex.

Its subcellular location is the cytoplasm. Functionally, component of the eukaryotic translation initiation factor 3 (eIF-3) complex, which is involved in protein synthesis of a specialized repertoire of mRNAs and, together with other initiation factors, stimulates binding of mRNA and methionyl-tRNAi to the 40S ribosome. The eIF-3 complex specifically targets and initiates translation of a subset of mRNAs involved in cell proliferation. The sequence is that of Eukaryotic translation initiation factor 3 subunit C from Caenorhabditis elegans.